The chain runs to 2380 residues: Probable polyketide synthase 25 (2380 aa).

The span at 1 to 18 shows a compositional bias: polar residues; sequence MDNSYLNNPQFDINNGNK. The segment at 1–29 is disordered; sequence MDNSYLNNPQFDINNGNKEVTDDDNNKNN. A Ketosynthase family 3 (KS3) domain is found at 31–457; sequence DNLVAIVGVG…GSNCCLVLSQ (427 aa). Active-site for beta-ketoacyl synthase activity residues include Cys-198, His-340, and His-380. Positions 649-682 are acyl/malonyl transferase; that stretch reads GIKASFMLGHSLGEVTTAYCSGMIDIDQLCYLIY. Ser-659 (for acyl/malonyl transferase activity) is an active-site residue. An N-terminal hotdog fold region spans residues 948-1070; sequence ISILGNSMQD…ANFQLYNNGK (123 aa). In terms of domain architecture, PKS/mFAS DH spans 948–1234; it reads ISILGNSMQD…CTSLTPVKDP (287 aa). The active-site Proton acceptor; for dehydratase activity is His-982. The segment at 1085-1234 is C-terminal hotdog fold; that stretch reads NLSSIPWDKF…CTSLTPVKDP (150 aa). The active-site Proton donor; for dehydratase activity is Asp-1148. The Carrier domain occupies 2299–2376; that stretch reads KNSTNIKDKF…MVCQIINDNF (78 aa). Position 2336 is an O-(pantetheine 4'-phosphoryl)serine (Ser-2336).

Pantetheine 4'-phosphate is required as a cofactor.

Probable polyketide synthase. This chain is Probable polyketide synthase 25 (pks25), found in Dictyostelium discoideum (Social amoeba).